The chain runs to 213 residues: uncharacterized protein (213 aa).

A compositionally biased stretch (polar residues) spans 1-14 (MSSDVLVTTPAQRQ). Residues 1–26 (MSSDVLVTTPAQRQTEPHAEAVSRNR) form a disordered region. Residues 29 to 89 (QATFRKVLAA…EVYLDLVRQV (61 aa)) form the HTH tetR-type domain.

This is an uncharacterized protein from Mycobacterium tuberculosis (strain CDC 1551 / Oshkosh).